The following is a 176-amino-acid chain: Peptide methionine sulfoxide reductase MsrA (176 aa).

The active site involves Cys-12.

It belongs to the MsrA Met sulfoxide reductase family.

It carries out the reaction L-methionyl-[protein] + [thioredoxin]-disulfide + H2O = L-methionyl-(S)-S-oxide-[protein] + [thioredoxin]-dithiol. It catalyses the reaction [thioredoxin]-disulfide + L-methionine + H2O = L-methionine (S)-S-oxide + [thioredoxin]-dithiol. Has an important function as a repair enzyme for proteins that have been inactivated by oxidation. Catalyzes the reversible oxidation-reduction of methionine sulfoxide in proteins to methionine. The sequence is that of Peptide methionine sulfoxide reductase MsrA from Thermus thermophilus (strain ATCC BAA-163 / DSM 7039 / HB27).